Reading from the N-terminus, the 625-residue chain is 1-deoxy-D-xylulose-5-phosphate synthase (625 aa).

Residues His80 and Gly121 to Ser123 each bind thiamine diphosphate. Position 152 (Asp152) interacts with Mg(2+). Thiamine diphosphate-binding positions include Gly153–Ala154, Asn181, Tyr290, and Glu371. Asn181 is a binding site for Mg(2+).

This sequence belongs to the transketolase family. DXPS subfamily. As to quaternary structure, homodimer. Requires Mg(2+) as cofactor. The cofactor is thiamine diphosphate.

The catalysed reaction is D-glyceraldehyde 3-phosphate + pyruvate + H(+) = 1-deoxy-D-xylulose 5-phosphate + CO2. It functions in the pathway metabolic intermediate biosynthesis; 1-deoxy-D-xylulose 5-phosphate biosynthesis; 1-deoxy-D-xylulose 5-phosphate from D-glyceraldehyde 3-phosphate and pyruvate: step 1/1. In terms of biological role, catalyzes the acyloin condensation reaction between C atoms 2 and 3 of pyruvate and glyceraldehyde 3-phosphate to yield 1-deoxy-D-xylulose-5-phosphate (DXP). The polypeptide is 1-deoxy-D-xylulose-5-phosphate synthase (Haemophilus influenzae (strain 86-028NP)).